The sequence spans 190 residues: Potassium-transporting ATPase KdpC subunit (190 aa).

Residues 10 to 30 (TFIFLLLITGGVYPLLTTVLG) form a helical membrane-spanning segment.

Belongs to the KdpC family. In terms of assembly, the system is composed of three essential subunits: KdpA, KdpB and KdpC.

The protein localises to the cell inner membrane. Part of the high-affinity ATP-driven potassium transport (or Kdp) system, which catalyzes the hydrolysis of ATP coupled with the electrogenic transport of potassium into the cytoplasm. This subunit acts as a catalytic chaperone that increases the ATP-binding affinity of the ATP-hydrolyzing subunit KdpB by the formation of a transient KdpB/KdpC/ATP ternary complex. This Shigella dysenteriae serotype 1 (strain Sd197) protein is Potassium-transporting ATPase KdpC subunit.